The chain runs to 1089 residues: Electroneutral sodium bicarbonate exchanger 1 (1089 aa).

Residues 1 to 476 lie on the Extracellular side of the membrane; it reads MPAGSNEPDG…DYRDALSLQC (476 aa). Residues 55–90 form a disordered region; that stretch reads LGRQSHRHHRTHGQKHRRRGGRGKGASQGEEGLEAL. Residues 58–76 show a composition bias toward basic residues; sequence QSHRHHRTHGQKHRRRGGR. The chain crosses the membrane as a helical span at residues 477–497; that stretch reads LASFLFLYCACMSPVITFGGL. The Cytoplasmic segment spans residues 498-505; it reads LGEATEGR. A helical membrane pass occupies residues 506 to 526; sequence ISAIESLFGASMTGIAYSLFA. The Extracellular portion of the chain corresponds to 527–563; it reads GQPLTILGSTGPVLVFEKILFKFCKDYALSYLSLRAL. The chain crosses the membrane as a helical span at residues 564 to 584; it reads IGLWTAFLCIVLVATDASSLV. The Cytoplasmic segment spans residues 585-593; it reads CYITRFTEE. The chain crosses the membrane as a helical span at residues 594-614; that stretch reads AFASLICIIFIYEAIEKLIHL. Over 615 to 685 the chain is Extracellular; sequence AETYPIHMHS…EFMGSACGHH (71 aa). 2 cysteine pairs are disulfide-bonded: Cys634–Cys682 and Cys636–Cys670. Asn644 is a glycosylation site (N-linked (GlcNAc) asparagine). A helical membrane pass occupies residues 686–706; the sequence is GPYTPDVLFWSCILFFATFIV. At 707-729 the chain is on the cytoplasmic side; it reads SSTLKTFKTSRYFPTRVRSMVSD. Residues 730-750 traverse the membrane as a helical segment; it reads FAVFLTIFTMVVLDFLIGVPS. Topologically, residues 751 to 776 are extracellular; it reads PKLQVPNVFKPTRDDRGWFINPIGPN. Residues 777 to 797 form a helical membrane-spanning segment; sequence PWWTVIAAIIPALLCTILIFM. Residues 798–822 are Cytoplasmic-facing; that stretch reads DQQITAVIINRKEHKLKKGCGYHLD. A helical membrane pass occupies residues 823–843; it reads LLMVAVMLGVCSIMGLPWFVA. Residues 844–879 lie on the Extracellular side of the membrane; it reads ATVLSITHVNSLKLESECSAPGEQPKFLGIREQRVT. The helical transmembrane segment at 880 to 900 threads the bilayer; that stretch reads GLMIFVLMGCSVFMTAVLKFI. Residues 901-902 are Cytoplasmic-facing; it reads PM. A helical membrane pass occupies residues 903–923; it reads PVLYGVFLYMGVSSLQGIQFF. The Extracellular portion of the chain corresponds to 924 to 960; the sequence is DRLKLFGMPAKHQPDFIYLRHVPLRKVHLFTLVQLTC. A helical membrane pass occupies residues 961–981; the sequence is LVLLWVIKASPAAIVFPMMVL. The Cytoplasmic portion of the chain corresponds to 982–1089; it reads ALVFVRKVMD…GNTKEKSPFN (108 aa).

It belongs to the anion exchanger (TC 2.A.31) family. In terms of assembly, homodimer. In terms of tissue distribution, expressed in the hippocampal neurons (at protein level). Highly expressed in brain with lower levels in lung, kidney and heart. In the kidney, there is high expression in the inner medulla, localized to the inner medullary collecting duct. In the brain, there seems to be three transcripts each having a different expression pattern. The smaller 3kb transcript has highest expression levels in the thalamus and the largest 9.5kb transcript has highest levels in the substantia nigra. The middle transcript of 4.4kb, which is also the main transcript in kidney, is highly expressed in thalamus. Hence, the highest levels are observed in the thalamus, amygdala and caudate nucleus and very low expression was seen in the corpus callosum.

It is found in the cell membrane. Its subcellular location is the apical cell membrane. The protein localises to the basolateral cell membrane. The protein resides in the cytoplasmic vesicle. It localises to the secretory vesicle. It is found in the synaptic vesicle membrane. It carries out the reaction 2 hydrogencarbonate(out) + chloride(in) + Na(+)(out) = 2 hydrogencarbonate(in) + chloride(out) + Na(+)(in). Mediates electroneutral sodium- and carbonate-dependent chloride-HCO3(-) exchange with a Na(+):HCO3(-) stoichiometry of 2:1. Plays a major role in pH regulation in neurons. Mediates sodium reabsorption in the renal cortical collecting ducts. In Mus musculus (Mouse), this protein is Electroneutral sodium bicarbonate exchanger 1.